The following is a 392-amino-acid chain: Formate-dependent phosphoribosylglycinamide formyltransferase (392 aa).

N(1)-(5-phospho-beta-D-ribosyl)glycinamide is bound by residues 22 to 23 and Glu82; that span reads EL. ATP-binding positions include Arg114, Lys155, 160 to 165, 195 to 198, and Glu203; these read SSGKGQ and EGVV. An ATP-grasp domain is found at 119–308; sequence RLAAEELGLP…EFALHVRAFL (190 aa). The Mg(2+) site is built by Glu267 and Glu279. N(1)-(5-phospho-beta-D-ribosyl)glycinamide-binding positions include Asp286, Lys355, and 362-363; that span reads RR.

The protein belongs to the PurK/PurT family. Homodimer.

The enzyme catalyses N(1)-(5-phospho-beta-D-ribosyl)glycinamide + formate + ATP = N(2)-formyl-N(1)-(5-phospho-beta-D-ribosyl)glycinamide + ADP + phosphate + H(+). It functions in the pathway purine metabolism; IMP biosynthesis via de novo pathway; N(2)-formyl-N(1)-(5-phospho-D-ribosyl)glycinamide from N(1)-(5-phospho-D-ribosyl)glycinamide (formate route): step 1/1. Involved in the de novo purine biosynthesis. Catalyzes the transfer of formate to 5-phospho-ribosyl-glycinamide (GAR), producing 5-phospho-ribosyl-N-formylglycinamide (FGAR). Formate is provided by PurU via hydrolysis of 10-formyl-tetrahydrofolate. The protein is Formate-dependent phosphoribosylglycinamide formyltransferase of Salmonella dublin (strain CT_02021853).